The sequence spans 317 residues: Acetyl-coenzyme A carboxylase carboxyl transferase subunit alpha (317 aa).

In terms of domain architecture, CoA carboxyltransferase C-terminal spans 40-294 (RLQKKSEELT…KARLLTDLED (255 aa)).

The protein belongs to the AccA family. In terms of assembly, acetyl-CoA carboxylase is a heterohexamer composed of biotin carboxyl carrier protein (AccB), biotin carboxylase (AccC) and two subunits each of ACCase subunit alpha (AccA) and ACCase subunit beta (AccD).

Its subcellular location is the cytoplasm. It carries out the reaction N(6)-carboxybiotinyl-L-lysyl-[protein] + acetyl-CoA = N(6)-biotinyl-L-lysyl-[protein] + malonyl-CoA. Its pathway is lipid metabolism; malonyl-CoA biosynthesis; malonyl-CoA from acetyl-CoA: step 1/1. Component of the acetyl coenzyme A carboxylase (ACC) complex. First, biotin carboxylase catalyzes the carboxylation of biotin on its carrier protein (BCCP) and then the CO(2) group is transferred by the carboxyltransferase to acetyl-CoA to form malonyl-CoA. In Actinobacillus succinogenes (strain ATCC 55618 / DSM 22257 / CCUG 43843 / 130Z), this protein is Acetyl-coenzyme A carboxylase carboxyl transferase subunit alpha.